A 365-amino-acid chain; its full sequence is 3-isopropylmalate dehydrogenase (365 aa).

80 to 91 (GPKWGTGEVRPE) serves as a coordination point for NAD(+). The substrate site is built by Arg-98, Arg-108, Arg-137, and Asp-226. 3 residues coordinate Mg(2+): Asp-226, Asp-251, and Asp-255. 290-301 (GSAPDLPKNKVN) serves as a coordination point for NAD(+).

It belongs to the isocitrate and isopropylmalate dehydrogenases family. As to quaternary structure, homodimer. Requires Mg(2+) as cofactor. Mn(2+) serves as cofactor.

The protein localises to the cytoplasm. It carries out the reaction (2R,3S)-3-isopropylmalate + NAD(+) = 4-methyl-2-oxopentanoate + CO2 + NADH. It functions in the pathway amino-acid biosynthesis; L-leucine biosynthesis; L-leucine from 3-methyl-2-oxobutanoate: step 3/4. In terms of biological role, catalyzes the oxidation of 3-carboxy-2-hydroxy-4-methylpentanoate (3-isopropylmalate) to 3-carboxy-4-methyl-2-oxopentanoate. The product decarboxylates to 4-methyl-2 oxopentanoate. In Candida boidinii (Yeast), this protein is 3-isopropylmalate dehydrogenase (LEU2).